The chain runs to 275 residues: NAC domain-containing protein 2 (275 aa).

An NAC domain is found at 10-162 (LPPGFRFHPT…DWVLCRIYKK (153 aa)). A DNA-binding region spans residues 107–168 (VGIKKALVFY…IYKKKNLERA (62 aa)).

Expressed in roots, stem, flowers, and leaves.

It is found in the nucleus. Its function is as follows. Transcription factor that binds DNA motifs 5'-CGT[AG](5N)NACG[ACT][AC][AT][ACG][ACT]-3' and 5'-CACG[ACT][AC][AT][AGT][CT]-3' in target genes promoters. Promotes leaf senescence (developmental, light-induced and ABA-induced senescence) and regulates fruit yield and sugar content, probably by establishing abscisic acid (ABA) homeostasis. Activates the expression of senescence and ABA associated genes including NCED1, ABCG40, CYP707A2, SAG113, SGR1 and PAO, by directly binding to their promoters. This is NAC domain-containing protein 2 from Solanum lycopersicum (Tomato).